Consider the following 233-residue polypeptide: Large ribosomal subunit protein uL1 (233 aa).

Belongs to the universal ribosomal protein uL1 family. Part of the 50S ribosomal subunit.

In terms of biological role, binds directly to 23S rRNA. The L1 stalk is quite mobile in the ribosome, and is involved in E site tRNA release. Protein L1 is also a translational repressor protein, it controls the translation of the L11 operon by binding to its mRNA. The protein is Large ribosomal subunit protein uL1 of Thermotoga maritima (strain ATCC 43589 / DSM 3109 / JCM 10099 / NBRC 100826 / MSB8).